The chain runs to 134 residues: Small ribosomal subunit protein uS11 (134 aa).

The disordered stretch occupies residues 114 to 134 (TPVPHNGTRPPRKWFKRQEKR). A compositionally biased stretch (basic residues) spans 123 to 134 (PPRKWFKRQEKR).

It belongs to the universal ribosomal protein uS11 family. As to quaternary structure, part of the 30S ribosomal subunit. Interacts with proteins S7 and S18. Binds to IF-3.

Functionally, located on the platform of the 30S subunit, it bridges several disparate RNA helices of the 16S rRNA. Forms part of the Shine-Dalgarno cleft in the 70S ribosome. The protein is Small ribosomal subunit protein uS11 of Mesomycoplasma hyopneumoniae (strain 232) (Mycoplasma hyopneumoniae).